A 106-amino-acid polypeptide reads, in one-letter code: MYLPWGVVLAGGANGFGAGAYQTGTICEVSTQIAVRLPDEIVAFIDDEVRGQHARSRAAVVLRALERERRRRLAERDAEILATNTSATGDLDTLAGHCARTALDID.

In terms of assembly, forms a complex with cognate toxin MazF3, possibly with 1:1 stoichiometry.

Its function is as follows. Antitoxin component of a type II toxin-antitoxin (TA) system. Upon expression in E.coli and M.smegmatis neutralizes the effect of cognate toxin MazF3. Overexpression of MazE3 alone decreased persister cells formation in M.smegmatis upon challenge with gentamicin or kanamycin. This Mycobacterium tuberculosis (strain ATCC 25618 / H37Rv) protein is Antitoxin MazE3 (mazE3).